Here is a 368-residue protein sequence, read N- to C-terminus: MSDNSQKKVIVGMSGGVDSSVSAYLLQQQGYHVEGLFMKNWEEDDDTEYCSAATDLADAQAVCDKLGIELHTVNFAAEYWDNVFELFLEEYKAGRTPNPDILCNKEIKFKAFLEFAAEDLGADYIATGHYVRRHDVDGKSRLLRGMDGNKDQSYFLYTLSHEQIAQSLFPVGELEKPQVRKIAEELELATAKKKDSTGICFIGERKFTDFLARYLPAQPGPILSVDDNKPMGQHQGLMYHTLGQRKGLGIGGVKDGGEDPWYVVDKDVANNILYVAQGHEHPRLMSHGLIAQQLHWVDRQPLTAELRCTVKTRYRQADIPCTVTPLGDDRITVRFDEPVAAVTPGQSAVFYLDDVCLGGGIIEERLQE.

ATP-binding positions include 12-19 and methionine 38; that span reads GMSGGVDS. Residues 98 to 100 form an interaction with target base in tRNA region; that stretch reads NPD. Cysteine 103 (nucleophile) is an active-site residue. The cysteines at positions 103 and 200 are disulfide-linked. Residue glycine 128 coordinates ATP. The segment at 150–152 is interaction with tRNA; sequence KDQ. Residue cysteine 200 is the Cysteine persulfide intermediate of the active site. Residues 313-314 are interaction with tRNA; the sequence is RY.

This sequence belongs to the MnmA/TRMU family. As to quaternary structure, interacts with TusE.

Its subcellular location is the cytoplasm. The catalysed reaction is S-sulfanyl-L-cysteinyl-[protein] + uridine(34) in tRNA + AH2 + ATP = 2-thiouridine(34) in tRNA + L-cysteinyl-[protein] + A + AMP + diphosphate + H(+). In terms of biological role, catalyzes the 2-thiolation of uridine at the wobble position (U34) of tRNA(Lys), tRNA(Glu) and tRNA(Gln), leading to the formation of s(2)U34, the first step of tRNA-mnm(5)s(2)U34 synthesis. Sulfur is provided by IscS, via a sulfur-relay system. Binds ATP and its substrate tRNAs. The polypeptide is tRNA-specific 2-thiouridylase MnmA (Pectobacterium carotovorum subsp. carotovorum (strain PC1)).